A 393-amino-acid chain; its full sequence is Potassium channel subfamily K member 4 (393 aa).

Residues 1–3 (MRS) are Cytoplasmic-facing. A helical membrane pass occupies residues 4–24 (TTLLALLALVLLYLVSGALVF). Over 25 to 87 (RALEQPHEQQ…NSTSNSSHSA (63 aa)) the chain is Extracellular. Asn78 and Asn82 each carry an N-linked (GlcNAc...) asparagine glycan. Positions 88 to 102 (WDLGSAFFFSGTIIT) form an intramembrane region, helical. K(+)-binding residues include Thr103, Ile104, Gly105, and Tyr106. A selectivity filter 1 region spans residues 103–108 (TIGYGN). The stretch at 103-109 (TIGYGNV) is an intramembrane region. Residues 110–117 (ALRTDAGR) are Extracellular-facing. The helical transmembrane segment at 118 to 150 (LFCIFYALVGIPLFGILLAGVGDRLGSSLRHGI) threads the bilayer. At 151–172 (GHIEAIFLKWHVPPELVRVLSA) the chain is on the cytoplasmic side. The helical transmembrane segment at 173–194 (MLFLLIGCLLFVLTPTFVFCYM) threads the bilayer. The Extracellular portion of the chain corresponds to 195 to 199 (EDWSK). The segment at residues 200-213 (LEAIYFVIVTLTTV) is an intramembrane region (helical). K(+)-binding residues include Thr212, Val213, Gly214, and Phe215. Residues 212–217 (TVGFGD) are selectivity filter 2. An intramembrane segment occupies 214–219 (GFGDYV). Residues 220–233 (AGADPRQDSPAYQP) lie on the Extracellular side of the membrane. The helical transmembrane segment at 234–260 (LVWFWILLGLAYFASVLTTIGNWLRVV) threads the bilayer. The Cytoplasmic segment spans residues 261 to 393 (SRRTRAEMGG…GRPRDKGVPV (133 aa)). The tract at residues 285-393 (RVTQRAGPAA…GRPRDKGVPV (109 aa)) is disordered. The segment covering 319 to 332 (SPSPPEKAQPPSPP) has biased composition (pro residues). The span at 365-384 (PRGRRRPNPPRKPVRPRGPG) shows a compositional bias: basic residues.

This sequence belongs to the two pore domain potassium channel (TC 1.A.1.8) family. As to quaternary structure, homodimer; disulfide-linked. Forms heterodimers with other 2-pore domain K(+) channel subunits, such as KCNK2 and KCNK10. Post-translationally, N-glycosylated.

The protein resides in the cell membrane. Its subcellular location is the cell projection. It is found in the axon. The catalysed reaction is K(+)(in) = K(+)(out). It catalyses the reaction Rb(+)(in) = Rb(+)(out). The enzyme catalyses Cs(+)(in) = Cs(+)(out). Activated by mechanical stretch and arachidonic acid. K(+) channel that conducts voltage-dependent outward rectifying currents upon membrane depolarization. Voltage sensing is coupled to K(+) electrochemical gradient in an 'ion flux gating' mode where outward but not inward ion flow opens the gate. Converts to voltage-independent 'leak' conductance mode upon stimulation by various stimuli including mechanical membrane stretch, basic pH, heat and lipids. Homo- and heterodimerizes to form functional channels with distinct regulatory and gating properties. At trigeminal A-beta afferent nerves, the heterodimer of KCNK2/TREK-1 and KCNK4/TRAAK is mostly coexpressed at nodes of Ranvier where it conducts voltage-independent mechanosensitive and thermosensitive currents, allowing rapid action potential repolarization, high speed and high frequence saltatory conduction on myelinated nerves to ensure prompt sensory responses. Permeable to other monovalent cations such as Rb(+) and Cs(+). This is Potassium channel subfamily K member 4 from Homo sapiens (Human).